A 396-amino-acid chain; its full sequence is Phosphoglycerate kinase (396 aa).

Residues 21 to 23, Arg36, 59 to 62, Arg118, and Arg151 each bind substrate; these read DIN and HFGR. Residues Lys201, Glu323, and 353–356 contribute to the ATP site; that span reads GGDT.

The protein belongs to the phosphoglycerate kinase family. As to quaternary structure, monomer.

Its subcellular location is the cytoplasm. It catalyses the reaction (2R)-3-phosphoglycerate + ATP = (2R)-3-phospho-glyceroyl phosphate + ADP. It participates in carbohydrate degradation; glycolysis; pyruvate from D-glyceraldehyde 3-phosphate: step 2/5. This Ruegeria sp. (strain TM1040) (Silicibacter sp.) protein is Phosphoglycerate kinase.